The chain runs to 393 residues: Homoserine O-succinyltransferase (393 aa).

In terms of domain architecture, AB hydrolase-1 spans 62–372; the sequence is NAVLVCHALN…PHGHDAFLLD (311 aa). Ser-168 serves as the catalytic Nucleophile. Substrate is bound at residue Arg-238. Residues Asp-333 and His-366 contribute to the active site. Asp-367 contributes to the substrate binding site.

It belongs to the AB hydrolase superfamily. MetX family. Homodimer.

Its subcellular location is the cytoplasm. It catalyses the reaction L-homoserine + succinyl-CoA = O-succinyl-L-homoserine + CoA. The protein operates within amino-acid biosynthesis; L-methionine biosynthesis via de novo pathway; O-succinyl-L-homoserine from L-homoserine: step 1/1. In terms of biological role, transfers a succinyl group from succinyl-CoA to L-homoserine, forming succinyl-L-homoserine. This chain is Homoserine O-succinyltransferase, found in Cupriavidus necator (strain ATCC 17699 / DSM 428 / KCTC 22496 / NCIMB 10442 / H16 / Stanier 337) (Ralstonia eutropha).